A 39-amino-acid chain; its full sequence is Photosystem II reaction center protein J (39 aa).

Residues 7–27 form a helical membrane-spanning segment; that stretch reads IPLWIVAVVAGMGVIAVVGIF.

It belongs to the PsbJ family. PSII is composed of 1 copy each of membrane proteins PsbA, PsbB, PsbC, PsbD, PsbE, PsbF, PsbH, PsbI, PsbJ, PsbK, PsbL, PsbM, PsbT, PsbX, PsbY, PsbZ, Psb30/Ycf12, peripheral proteins PsbO, CyanoQ (PsbQ), PsbU, PsbV and a large number of cofactors. It forms dimeric complexes.

It localises to the cellular thylakoid membrane. Functionally, this protein is a component of the reaction center of photosystem II. Its function is as follows. One of the components of the core complex of photosystem II (PSII). PSII is a light-driven water:plastoquinone oxidoreductase that uses light energy to abstract electrons from H(2)O, generating O(2) and a proton gradient subsequently used for ATP formation. It consists of a core antenna complex that captures photons, and an electron transfer chain that converts photonic excitation into a charge separation. The chain is Photosystem II reaction center protein J from Picosynechococcus sp. (strain ATCC 27264 / PCC 7002 / PR-6) (Agmenellum quadruplicatum).